The following is a 429-amino-acid chain: UPF0597 protein BT_2080 (429 aa).

This sequence belongs to the UPF0597 family.

This chain is UPF0597 protein BT_2080, found in Bacteroides thetaiotaomicron (strain ATCC 29148 / DSM 2079 / JCM 5827 / CCUG 10774 / NCTC 10582 / VPI-5482 / E50).